We begin with the raw amino-acid sequence, 561 residues long: Ankyrin repeat protein OPG189 (561 aa).

ANK repeat units follow at residues Tyr68 to Lys98, Tyr172 to Lys208, Tyr212 to Ser242, Asn246 to Ala275, Phe279 to Ile307, Tyr342 to Thr371, and Ser375 to Ile404.

Belongs to the orthopoxvirus OPG189 protein family.

Contributes to viral release without involving rearrangement of host actin. This chain is Ankyrin repeat protein OPG189 (OPG189), found in Cynomys gunnisoni (Gunnison's prairie dog).